An 825-amino-acid chain; its full sequence is Probable phosphoketolase (825 aa).

It belongs to the XFP family. Requires thiamine diphosphate as cofactor.

The polypeptide is Probable phosphoketolase (Schizosaccharomyces pombe (strain 972 / ATCC 24843) (Fission yeast)).